Reading from the N-terminus, the 86-residue chain is Cytochrome c oxidase subunit 6B1 (86 aa).

The residue at position 2 (Ala2) is an N-acetylalanine. The region spanning 27–73 (TRNCWQNYLDFHRCEKAMTAKGGDVSVCEWYRRVYKSLCPISWVSTW) is the CHCH domain. A Cx9C motif motif is present at residues 30 to 40 (CWQNYLDFHRC). Cystine bridges form between Cys30–Cys65 and Cys40–Cys54. Positions 54–65 (CEWYRRVYKSLC) match the Cx10C motif motif. Residue Lys62 is modified to N6-acetyllysine.

This sequence belongs to the cytochrome c oxidase subunit 6B family. Component of the cytochrome c oxidase (complex IV, CIV), a multisubunit enzyme composed of 14 subunits. The complex is composed of a catalytic core of 3 subunits MT-CO1, MT-CO2 and MT-CO3, encoded in the mitochondrial DNA, and 11 supernumerary subunits COX4I, COX5A, COX5B, COX6A, COX6B, COX6C, COX7A, COX7B, COX7C, COX8 and NDUFA4, which are encoded in the nuclear genome. The complex exists as a monomer or a dimer and forms supercomplexes (SCs) in the inner mitochondrial membrane with NADH-ubiquinone oxidoreductase (complex I, CI) and ubiquinol-cytochrome c oxidoreductase (cytochrome b-c1 complex, complex III, CIII), resulting in different assemblies (supercomplex SCI(1)III(2)IV(1) and megacomplex MCI(2)III(2)IV(2)).

The protein localises to the mitochondrion inner membrane. Its pathway is energy metabolism; oxidative phosphorylation. Functionally, component of the cytochrome c oxidase, the last enzyme in the mitochondrial electron transport chain which drives oxidative phosphorylation. The respiratory chain contains 3 multisubunit complexes succinate dehydrogenase (complex II, CII), ubiquinol-cytochrome c oxidoreductase (cytochrome b-c1 complex, complex III, CIII) and cytochrome c oxidase (complex IV, CIV), that cooperate to transfer electrons derived from NADH and succinate to molecular oxygen, creating an electrochemical gradient over the inner membrane that drives transmembrane transport and the ATP synthase. Cytochrome c oxidase is the component of the respiratory chain that catalyzes the reduction of oxygen to water. Electrons originating from reduced cytochrome c in the intermembrane space (IMS) are transferred via the dinuclear copper A center (CU(A)) of subunit 2 and heme A of subunit 1 to the active site in subunit 1, a binuclear center (BNC) formed by heme A3 and copper B (CU(B)). The BNC reduces molecular oxygen to 2 water molecules using 4 electrons from cytochrome c in the IMS and 4 protons from the mitochondrial matrix. This chain is Cytochrome c oxidase subunit 6B1 (COX6B1), found in Carlito syrichta (Philippine tarsier).